The primary structure comprises 248 residues: tRNA pseudouridine synthase A (248 aa).

D52 serves as the catalytic Nucleophile. Position 111 (Y111) interacts with substrate.

The protein belongs to the tRNA pseudouridine synthase TruA family. As to quaternary structure, homodimer.

It carries out the reaction uridine(38/39/40) in tRNA = pseudouridine(38/39/40) in tRNA. In terms of biological role, formation of pseudouridine at positions 38, 39 and 40 in the anticodon stem and loop of transfer RNAs. In Methylocella silvestris (strain DSM 15510 / CIP 108128 / LMG 27833 / NCIMB 13906 / BL2), this protein is tRNA pseudouridine synthase A.